The primary structure comprises 1824 residues: Treslin (1824 aa).

10 disordered regions span residues 542–572 (EFYQSSTAGSSGSLRSKKRGTQCTPVRQKMK), 590–622 (AQKTQGDSGSAGSGKGTEKGGKKSSGDRTKPGL), 907–973 (SPSK…SGES), 1001–1035 (RHSSVFYSSSQPRSRNLDRVVSSSQLSHSEGKGKF), 1098–1117 (AVGCRTPQSPRTPNRTVGDN), 1189–1221 (VPENQVNVPDSPVFAKRHSPRLVTPGKNSSPEE), 1293–1388 (PFCN…DDDK), 1459–1518 (FEGK…QSSP), 1617–1650 (TPTHHPTSSQSPLASPLTPSPQSRGWPTPENLNS), and 1803–1824 (PLCQPRRRRTPSRTYSRKKLLD). Positions 546–555 (SSTAGSSGSL) are enriched in low complexity. Residues 562-572 (TQCTPVRQKMK) are compositionally biased toward polar residues. The segment covering 605 to 619 (GTEKGGKKSSGDRTK) has biased composition (basic and acidic residues). Positions 907–921 (SPSKKSKMPRSQSVS) are enriched in polar residues. Residues 932-952 (SDVDNDDRHTLLTKKVSETPL) are compositionally biased toward basic and acidic residues. 2 stretches are compositionally biased toward polar residues: residues 1005-1014 (VFYSSSQPRS) and 1103-1114 (TPQSPRTPNRTV). Residues 1319–1345 (RSGNTPVKESCSPSSNSQGITGTSPSP) are compositionally biased toward polar residues. Residues 1347–1370 (KSLSSAVAKSSPSPSFGPSRSGVG) are compositionally biased toward low complexity. Positions 1462–1472 (KQTTSTGTPLT) are enriched in polar residues. Positions 1480–1490 (TPDRRQREAEA) are enriched in basic and acidic residues. 2 stretches are compositionally biased toward polar residues: residues 1617-1629 (TPTHHPTSSQSPL) and 1636-1650 (SPQSRGWPTPENLNS). Residues 1807–1824 (PRRRRTPSRTYSRKKLLD) show a composition bias toward basic residues.

The protein belongs to the treslin family. In terms of assembly, interacts with topbp1 (via BRCT domains); interaction takes place in a cdk2-dependent manner. Component of the replisome complex.

Its subcellular location is the nucleus. In terms of biological role, regulator of DNA replication and S/M and G2/M checkpoints. Regulates the triggering of DNA replication initiation via its interaction with topbp1 by participating in cdk2-mediated loading of cdc45l onto replication origins. Required for the transition from pre-replication complex (pre-RC) to pre-initiation complex (pre-IC). Required to prevent mitotic entry after treatment with ionizing radiation. The polypeptide is Treslin (ticrr) (Danio rerio (Zebrafish)).